Reading from the N-terminus, the 52-residue chain is Large ribosomal subunit protein bL33 (52 aa).

This sequence belongs to the bacterial ribosomal protein bL33 family.

The polypeptide is Large ribosomal subunit protein bL33 (Anaeromyxobacter sp. (strain Fw109-5)).